The chain runs to 507 residues: Fluoroacetaldehyde dehydrogenase (507 aa).

219–225 (GFGIEAG) provides a ligand contact to NAD(+). Catalysis depends on residues Glu263 and Cys302.

Belongs to the aldehyde dehydrogenase family. As to quaternary structure, homotetramer.

It catalyses the reaction fluoroacetaldehyde + NAD(+) + H2O = fluoroacetate + NADH + 2 H(+). Functionally, catalyzes the oxidation of fluoroacetaldehyde to fluoroacetate. Has high affinity for fluoroacetate and glycolaldehyde but not for acetaldehyde. This Streptantibioticus cattleyicolor (strain ATCC 35852 / DSM 46488 / JCM 4925 / NBRC 14057 / NRRL 8057) (Streptomyces cattleya) protein is Fluoroacetaldehyde dehydrogenase.